The chain runs to 793 residues: PC3-like endoprotease variant A (793 aa).

The first 29 residues, 1-29, serve as a signal peptide directing secretion; that stretch reads MNYRGIYRRRYVFVLLLLVAVVNISYGWT. The propeptide occupies 30-152; sequence VLKNKDYKRR…QQKILERVKR (123 aa). N-linked (GlcNAc...) asparagine glycans are attached at residues Asn62 and Asn190. Residues 164–486 enclose the Peptidase S8 domain; sequence MWYLLNTGQA…FGRLDANAMV (323 aa). Active-site charge relay system residues include Asp202 and His242. Intrachain disulfides connect Cys259-Cys411 and Cys351-Cys381. Ser419 (charge relay system) is an active-site residue. The 144-residue stretch at 495-638 folds into the P/Homo B domain; sequence LPAQRKCTAA…EERVIDTQTK (144 aa). Cys501 and Cys527 are oxidised to a cystine.

This sequence belongs to the peptidase S8 family. Furin subfamily. In terms of tissue distribution, predominantly in the body column.

Probably involved in the processing of hormone and other protein precursors at sites comprised of pairs of basic amino acid residues. The protein is PC3-like endoprotease variant A of Hydra vulgaris (Hydra).